A 379-amino-acid chain; its full sequence is Cytochrome b (379 aa).

4 consecutive transmembrane segments (helical) span residues Phe33–Met53, Trp77–Ile98, Trp113–Leu133, and Phe178–Leu198. Heme b contacts are provided by His83 and His97. Positions 182 and 196 each coordinate heme b. His201 lines the a ubiquinone pocket. The next 4 helical transmembrane spans lie at Tyr226–Tyr246, Leu288–His308, Ala320–Gly340, and Tyr347–Pro367.

It belongs to the cytochrome b family. In terms of assembly, the cytochrome bc1 complex contains 3 respiratory subunits (MT-CYB, CYC1 and UQCRFS1), 2 core proteins (UQCRC1 and UQCRC2) and probably 6 low-molecular weight proteins. It depends on heme b as a cofactor.

It localises to the mitochondrion inner membrane. Its function is as follows. Component of the ubiquinol-cytochrome c reductase complex (complex III or cytochrome b-c1 complex) that is part of the mitochondrial respiratory chain. The b-c1 complex mediates electron transfer from ubiquinol to cytochrome c. Contributes to the generation of a proton gradient across the mitochondrial membrane that is then used for ATP synthesis. The polypeptide is Cytochrome b (mt-cyb) (Anguilla reinhardtii (Speckled longfin eel)).